A 634-amino-acid polypeptide reads, in one-letter code: 1-deoxy-D-xylulose-5-phosphate synthase (634 aa).

Thiamine diphosphate contacts are provided by residues H74 and 115-117; that span reads AHS. D146 is a binding site for Mg(2+). Thiamine diphosphate contacts are provided by residues 147-148, N176, Y283, and E365; that span reads GA. Position 176 (N176) interacts with Mg(2+).

The protein belongs to the transketolase family. DXPS subfamily. Homodimer. The cofactor is Mg(2+). Thiamine diphosphate is required as a cofactor.

The catalysed reaction is D-glyceraldehyde 3-phosphate + pyruvate + H(+) = 1-deoxy-D-xylulose 5-phosphate + CO2. Its pathway is metabolic intermediate biosynthesis; 1-deoxy-D-xylulose 5-phosphate biosynthesis; 1-deoxy-D-xylulose 5-phosphate from D-glyceraldehyde 3-phosphate and pyruvate: step 1/1. Its function is as follows. Catalyzes the acyloin condensation reaction between C atoms 2 and 3 of pyruvate and glyceraldehyde 3-phosphate to yield 1-deoxy-D-xylulose-5-phosphate (DXP). This chain is 1-deoxy-D-xylulose-5-phosphate synthase, found in Burkholderia thailandensis (strain ATCC 700388 / DSM 13276 / CCUG 48851 / CIP 106301 / E264).